The primary structure comprises 314 residues: 2-methoxy-6-polyprenyl-1,4-benzoquinol methylase, mitochondrial (314 aa).

The transit peptide at methionine 1–arginine 19 directs the protein to the mitochondrion. S-adenosyl-L-methionine-binding positions include threonine 109, aspartate 154, asparagine 186–serine 187, and serine 203.

This sequence belongs to the class I-like SAM-binding methyltransferase superfamily. MenG/UbiE family. As to quaternary structure, component of a multi-subunit COQ enzyme complex.

The protein resides in the mitochondrion inner membrane. It carries out the reaction a 2-methoxy-6-(all-trans-polyprenyl)benzene-1,4-diol + S-adenosyl-L-methionine = a 5-methoxy-2-methyl-3-(all-trans-polyprenyl)benzene-1,4-diol + S-adenosyl-L-homocysteine + H(+). Its pathway is cofactor biosynthesis; ubiquinone biosynthesis. In terms of biological role, methyltransferase required for the conversion of 2-polyprenyl-6-methoxy-1,4-benzoquinol (DDMQH2) to 2-polyprenyl-3-methyl-6-methoxy-1,4-benzoquinol (DMQH2). The chain is 2-methoxy-6-polyprenyl-1,4-benzoquinol methylase, mitochondrial from Dictyostelium discoideum (Social amoeba).